A 1451-amino-acid chain; its full sequence is Copper-transporting ATPase 2 (1451 aa).

Topologically, residues 1–646 are cytoplasmic; the sequence is MPEQERKVTA…KTEIKQWKKS (646 aa). HMA domains follow at residues 57–123, 142–208, and 256–322; these read TTGV…FEAS, AVVK…FEAA, and ATLP…PGYF. Cu(+)-binding residues include Cys68, Cys71, Cys153, Cys156, Cys267, and Cys270. Residues 328–353 form a disordered region; the sequence is DGLEKESGSSSVPSLGSSQRQQEPGP. Over residues 335–345 the composition is skewed to low complexity; it reads GSSSVPSLGSS. The 67-residue stretch at 355–421 folds into the HMA 4 domain; it reads RTAVLTITGI…AVEDMGFEVS (67 aa). Ser469, Ser471, and Ser474 each carry phosphoserine. HMA domains follow at residues 481–547 and 557–623; these read QKCF…FEAA and GDIE…FHAS. Residues Cys492, Cys495, Cys568, and Cys571 each contribute to the Cu(+) site. Residues 647–668 traverse the membrane as a helical segment; sequence FLCSLVFGIPVMGLMIYMLIPS. Residues 669–690 lie on the Extracellular side of the membrane; the sequence is SKPHETMVLDHNIIPGLSVLNL. A helical transmembrane segment spans residues 691–710; sequence IFFILCTFVQFLGGWYFYVQ. At 711–717 the chain is on the cytoplasmic side; it reads AYKSLRH. A helical membrane pass occupies residues 718–738; the sequence is KSANMDVLIVLATTIAYAYSL. The Extracellular portion of the chain corresponds to 739–757; that stretch reads VILVVAIAEKAEKSPVTFF. Residues 758-778 traverse the membrane as a helical segment; it reads DTPPMLFVFIALGRWLEHVAK. Over 779–912 the chain is Cytoplasmic; that stretch reads SKTSEALAKL…KAPIQQLADR (134 aa). The chain crosses the membrane as a helical span at residues 913–935; the sequence is FSGYFVPFIIIISTLTLVVWIII. Residues 936 to 965 lie on the Extracellular side of the membrane; it reads GFVDFGIVQKYFPSPSKHISQTEVIIRFAF. The chain crosses the membrane as a helical span at residues 966–987; the sequence is QTSITVLCIACPCSLGLATPTA. The Cytoplasmic portion of the chain corresponds to 988–1310; the sequence is VMVGTGVAAQ…LSKRTVRRIR (323 aa). The active-site 4-aspartylphosphate intermediate is Asp1020. Residues Asp1255 and Asp1259 each contribute to the Mg(2+) site. Residues 1311 to 1328 traverse the membrane as a helical segment; it reads VNLVLALIYNMVGIPIAA. Residues 1329–1339 lie on the Extracellular side of the membrane; the sequence is GVFMPIGIVLQ. Residues 1340–1357 traverse the membrane as a helical segment; it reads PWMGSAAASSVSVVLSSL. Topologically, residues 1358 to 1451 are cytoplasmic; it reads QLKCYRKPDL…LSDRDEEQCI (94 aa). Phosphoserine occurs at positions 1384 and 1443.

Belongs to the cation transport ATPase (P-type) (TC 3.A.3) family. Type IB subfamily. Monomer. Interacts with COMMD1/MURR1. Interacts with DCTN4, in a copper-dependent manner. Interacts with ATOX1. Interacts (via C-terminus) with ZBTB16/PLZF. In terms of tissue distribution, expressed in brain, liver, kidney, spleen and stomach. In brain, detected in neuronal cells of the hippocampal formation, olfactory bulbs, cerebellum, cerebral cortex and nuclei in the brainstem. Isoform PINA is expressed during night in adult pineal gland (pinealocytes) and retina. Isoform PINA is not detected in other tissue.

It is found in the golgi apparatus. The protein resides in the trans-Golgi network membrane. Its subcellular location is the late endosome. It carries out the reaction Cu(+)(in) + ATP + H2O = Cu(+)(out) + ADP + phosphate + H(+). In terms of biological role, copper ion transmembrane transporter involved in the export of copper out of the cells, such as the efflux of hepatic copper into the bile. The chain is Copper-transporting ATPase 2 (Atp7b) from Rattus norvegicus (Rat).